The chain runs to 259 residues: Proteasome subunit alpha (259 aa).

This sequence belongs to the peptidase T1A family. As to quaternary structure, the 20S proteasome core is composed of 14 alpha and 14 beta subunits that assemble into four stacked heptameric rings, resulting in a barrel-shaped structure. The two inner rings, each composed of seven catalytic beta subunits, are sandwiched by two outer rings, each composed of seven alpha subunits. The catalytic chamber with the active sites is on the inside of the barrel. Has a gated structure, the ends of the cylinder being occluded by the N-termini of the alpha-subunits. Is capped at one or both ends by the proteasome regulatory ATPase, PAN.

The protein resides in the cytoplasm. Its activity is regulated as follows. The formation of the proteasomal ATPase PAN-20S proteasome complex, via the docking of the C-termini of PAN into the intersubunit pockets in the alpha-rings, triggers opening of the gate for substrate entry. Interconversion between the open-gate and close-gate conformations leads to a dynamic regulation of the 20S proteasome proteolysis activity. Functionally, component of the proteasome core, a large protease complex with broad specificity involved in protein degradation. This Methanococcus vannielii (strain ATCC 35089 / DSM 1224 / JCM 13029 / OCM 148 / SB) protein is Proteasome subunit alpha.